Here is a 335-residue protein sequence, read N- to C-terminus: Erlin-2 (335 aa).

Topologically, residues 1–2 (MS) are cytoplasmic. The helical transmembrane segment at 3 to 23 (HAGAIAAIGVALIAAALFSAI) threads the bilayer. Over 24–335 (HKIEEGHVGV…ALNEPAVGDE (312 aa)) the chain is Lumenal. A glycan (N-linked (GlcNAc...) asparagine) is linked at N106. Positions 310–321 (AGPSVQSATLLQ) are enriched in polar residues. The segment at 310-335 (AGPSVQSATLLQDDSPALNEPAVGDE) is disordered.

The protein belongs to the band 7/mec-2 family.

The protein resides in the endoplasmic reticulum membrane. Mediates the endoplasmic reticulum-associated degradation (ERAD) of inositol 1,4,5-trisphosphate receptors (IP3Rs). Promotes sterol-accelerated ERAD of HMGCR. Involved in regulation of cellular cholesterol homeostasis by regulation the SREBP signaling pathway. This chain is Erlin-2 (erlin2), found in Xenopus tropicalis (Western clawed frog).